The primary structure comprises 340 residues: S-adenosylmethionine:tRNA ribosyltransferase-isomerase (340 aa).

Belongs to the QueA family. In terms of assembly, monomer.

It is found in the cytoplasm. It catalyses the reaction 7-aminomethyl-7-carbaguanosine(34) in tRNA + S-adenosyl-L-methionine = epoxyqueuosine(34) in tRNA + adenine + L-methionine + 2 H(+). Its pathway is tRNA modification; tRNA-queuosine biosynthesis. Transfers and isomerizes the ribose moiety from AdoMet to the 7-aminomethyl group of 7-deazaguanine (preQ1-tRNA) to give epoxyqueuosine (oQ-tRNA). The polypeptide is S-adenosylmethionine:tRNA ribosyltransferase-isomerase (Macrococcus caseolyticus (strain JCSC5402) (Macrococcoides caseolyticum)).